We begin with the raw amino-acid sequence, 511 residues long: Histidine ammonia-lyase (511 aa).

The segment at residues 142–144 (ASG) is a cross-link (5-imidazolinone (Ala-Gly)). Ser-143 carries the 2,3-didehydroalanine (Ser) modification.

It belongs to the PAL/histidase family. Post-translationally, contains an active site 4-methylidene-imidazol-5-one (MIO), which is formed autocatalytically by cyclization and dehydration of residues Ala-Ser-Gly.

The protein localises to the cytoplasm. It carries out the reaction L-histidine = trans-urocanate + NH4(+). It functions in the pathway amino-acid degradation; L-histidine degradation into L-glutamate; N-formimidoyl-L-glutamate from L-histidine: step 1/3. This chain is Histidine ammonia-lyase, found in Brucella abortus (strain S19).